The chain runs to 31 residues: Ranatuerin-2Ca (31 aa).

Residues Cys24 and Cys29 are joined by a disulfide bond.

Expressed by the skin glands.

Its subcellular location is the secreted. In terms of biological role, antibacterial activity against Gram-positive bacterium S.aureus and Gram-negative bacterium E.coli. Has activity against C.albicans. This chain is Ranatuerin-2Ca, found in Lithobates clamitans (Green frog).